The following is a 119-amino-acid chain: UPF0102 protein CGSHiGG_01960 (119 aa).

This sequence belongs to the UPF0102 family.

This Haemophilus influenzae (strain PittGG) protein is UPF0102 protein CGSHiGG_01960.